A 27-amino-acid chain; its full sequence is Flagellar filament 31.5 kDa core protein (27 aa).

This sequence belongs to the bacterial flagellin family. The flagellum consists of an outer layer composed of repeating units of FlaA around a core that contains one or all of five antigenically related polypeptides.

It is found in the periplasmic flagellum. It localises to the periplasm. Functionally, component of the core of the flagella. The protein is Flagellar filament 31.5 kDa core protein of Spirochaeta aurantia.